Here is a 283-residue protein sequence, read N- to C-terminus: MGEILDGKKLAWELGEKLGSEVDSLKEHGVSPKLCVINIGDDPASKVYVASKKRKAEKLGIKQVVYQLPADESEEDVLKLIDSLNADPEVSSLMVQLPVPPQINADRVIERIDPEKDVDCLTPANIGRLWQGKHFVEPATAAGIIALLDHYQIDLTGKNAVIVGRSNIVGKPLAALMLERNASVSILHSRSRNLADLTKQADILVCAVGKAEMIKADMVKEGAVVIDVGINRVDGHLVGDVDFAPVKEKASWITPVPGGVGPLTVEFLMEEVIKLTRRQHGLD.

NADP(+) contacts are provided by residues 164–166 (GRS), Ser-189, and Ile-230.

The protein belongs to the tetrahydrofolate dehydrogenase/cyclohydrolase family. Homodimer.

It carries out the reaction (6R)-5,10-methylene-5,6,7,8-tetrahydrofolate + NADP(+) = (6R)-5,10-methenyltetrahydrofolate + NADPH. The catalysed reaction is (6R)-5,10-methenyltetrahydrofolate + H2O = (6R)-10-formyltetrahydrofolate + H(+). It participates in one-carbon metabolism; tetrahydrofolate interconversion. Functionally, catalyzes the oxidation of 5,10-methylenetetrahydrofolate to 5,10-methenyltetrahydrofolate and then the hydrolysis of 5,10-methenyltetrahydrofolate to 10-formyltetrahydrofolate. In Lactobacillus delbrueckii subsp. bulgaricus (strain ATCC 11842 / DSM 20081 / BCRC 10696 / JCM 1002 / NBRC 13953 / NCIMB 11778 / NCTC 12712 / WDCM 00102 / Lb 14), this protein is Bifunctional protein FolD.